A 4010-amino-acid polypeptide reads, in one-letter code: Extracellular matrix organizing protein FRAS1 (4010 aa).

The N-terminal stretch at 1–25 (MGVLKAWLGVALALAEFAVLPNCEG) is a signal peptide. 5 VWFC domains span residues 26–87 (ACLY…PQCA), 92–152 (GSCH…PICV), 156–216 (KPCS…SQCS), 218–278 (RSCS…EECA), and 282–342 (RSCS…PECI). Residues 26-3903 (ACLYQGSFLA…AASLSQTGAS (3878 aa)) lie on the Extracellular side of the membrane. At Ser343 the chain carries Phosphoserine. Residues 358–416 (SSSAREIKHVPDGEKWEEGPCKLCECREAQVTCYEPSCPPCPVATLALVVKGQCCPDCT) enclose the VWFC 6 domain. FU repeat units lie at residues 408-459 (KGQC…GFYQ), 461-504 (GSLC…GFYQ), 506-552 (HHSC…GFYN), 554-598 (QGTC…GYYA), 601-646 (TGSC…GFYP), 648-704 (HGIC…HFYL), 707-752 (TGLC…THFN), 754-799 (EGTC…EQFL), 802-851 (VGYC…GHYK), 853-899 (RGTC…GHYL), 902-947 (NQVC…QYYL), 951-996 (TKTC…QHYR), 998-1041 (SGSC…GYFA), and 1045-1088 (KHRC…GFSG). An N-linked (GlcNAc...) asparagine glycan is attached at Asn727. Asn1094 and Asn1107 each carry an N-linked (GlcNAc...) asparagine glycan. CSPG repeat units lie at residues 1101–1196 (TPSL…LKIS), 1216–1307 (APYV…FQAN), 1328–1440 (ALRL…FQVS), 1465–1561 (APKL…FSFA), 1597–1691 (PAFQ…ISVT), 1712–1812 (GPRL…FSVS), and 1834–1938 (PPHI…FYVS). Asn1506 is a glycosylation site (N-linked (GlcNAc...) asparagine). N-linked (GlcNAc...) asparagine glycosylation is present at Asn1779. 2 N-linked (GlcNAc...) asparagine glycosylation sites follow: Asn1950 and Asn1980. CSPG repeat units follow at residues 1959-2059 (EPPR…FSLT), 2080-2179 (IPHL…FDVV), 2201-2293 (PPVV…FVLS), 2313-2406 (ARPL…FTVS), and 2441-2538 (TPRI…FLVK). 5 consecutive Calx-beta domains span residues 2545–2648 (VSDN…VGLS), 2661–2772 (AKVV…IALA), 2786–2892 (AKVL…VFLS), 2907–3009 (IAIN…VYLG), and 3027–3131 (ATVT…LVLG). 3 N-linked (GlcNAc...) asparagine glycosylation sites follow: Asn2565, Asn2666, and Asn2684. Asn2910, Asn2987, Asn3072, Asn3220, Asn3678, and Asn3877 each carry an N-linked (GlcNAc...) asparagine glycan. Residues 3904-3924 (IGSALAAIMLLLLLFLVACFV) form a helical membrane-spanning segment. Residues 3925 to 4010 (TRKCQKQKKK…HNNLQDGTEV (86 aa)) lie on the Cytoplasmic side of the membrane.

Belongs to the FRAS1 family.

Its subcellular location is the cell membrane. Involved in extracellular matrix organization. Required for the regulation of epidermal-basement membrane adhesion responsible for proper organogenesis during embryonic development. Involved in brain organization and function. The sequence is that of Extracellular matrix organizing protein FRAS1 from Mus musculus (Mouse).